The chain runs to 550 residues: Glucose-6-phosphate isomerase (550 aa).

The active-site Proton donor is the Glu356. Residues His387 and Lys515 contribute to the active site.

The protein belongs to the GPI family.

The protein resides in the cytoplasm. The enzyme catalyses alpha-D-glucose 6-phosphate = beta-D-fructose 6-phosphate. It functions in the pathway carbohydrate biosynthesis; gluconeogenesis. It participates in carbohydrate degradation; glycolysis; D-glyceraldehyde 3-phosphate and glycerone phosphate from D-glucose: step 2/4. Functionally, catalyzes the reversible isomerization of glucose-6-phosphate to fructose-6-phosphate. This is Glucose-6-phosphate isomerase from Aliivibrio fischeri (strain MJ11) (Vibrio fischeri).